Reading from the N-terminus, the 616-residue chain is Dihydroxy-acid dehydratase (616 aa).

Asp-81 contacts Mg(2+). Cys-122 serves as a coordination point for [2Fe-2S] cluster. Residues Asp-123 and Lys-124 each coordinate Mg(2+). Lys-124 is subject to N6-carboxylysine. Cys-195 is a [2Fe-2S] cluster binding site. Residue Glu-491 participates in Mg(2+) binding. Catalysis depends on Ser-517, which acts as the Proton acceptor.

The protein belongs to the IlvD/Edd family. As to quaternary structure, homodimer. Requires [2Fe-2S] cluster as cofactor. Mg(2+) is required as a cofactor.

The catalysed reaction is (2R)-2,3-dihydroxy-3-methylbutanoate = 3-methyl-2-oxobutanoate + H2O. It carries out the reaction (2R,3R)-2,3-dihydroxy-3-methylpentanoate = (S)-3-methyl-2-oxopentanoate + H2O. The protein operates within amino-acid biosynthesis; L-isoleucine biosynthesis; L-isoleucine from 2-oxobutanoate: step 3/4. It functions in the pathway amino-acid biosynthesis; L-valine biosynthesis; L-valine from pyruvate: step 3/4. Functions in the biosynthesis of branched-chain amino acids. Catalyzes the dehydration of (2R,3R)-2,3-dihydroxy-3-methylpentanoate (2,3-dihydroxy-3-methylvalerate) into 2-oxo-3-methylpentanoate (2-oxo-3-methylvalerate) and of (2R)-2,3-dihydroxy-3-methylbutanoate (2,3-dihydroxyisovalerate) into 2-oxo-3-methylbutanoate (2-oxoisovalerate), the penultimate precursor to L-isoleucine and L-valine, respectively. This Salmonella gallinarum (strain 287/91 / NCTC 13346) protein is Dihydroxy-acid dehydratase.